The sequence spans 245 residues: Eukaryotic translation initiation factor 6-2 (245 aa).

This sequence belongs to the eIF-6 family. Monomer. Associates with the 60S ribosomal subunit.

The protein resides in the cytoplasm. Its subcellular location is the nucleus. It localises to the nucleolus. In terms of biological role, binds to the 60S ribosomal subunit and prevents its association with the 40S ribosomal subunit to form the 80S initiation complex in the cytoplasm. May also be involved in ribosome biogenesis. In Arabidopsis thaliana (Mouse-ear cress), this protein is Eukaryotic translation initiation factor 6-2.